Reading from the N-terminus, the 744-residue chain is Leucine-rich repeat extensin-like protein 1 (744 aa).

A signal peptide spans 1-26 (MLFPPLRSLFLFTLLLSSVCFLQIKA). Asparagine 71 and asparagine 77 each carry an N-linked (GlcNAc...) asparagine glycan. LRR repeat units follow at residues 122–145 (LSDLALFHINSNRFCGEVPLTFNR), 147–170 (KLLYELDLSNNRFVGKFPKVVLSL), 171–194 (PSLKFLDLRYNEFEGKIPSKLFDR), 196–217 (LDAIFLNHNRFRFGIPKNMGNS), 219–240 (VSALVLADNNLGGCIPGSIGQM), 241–265 (GKTLNELILSNDNLTGCLPPQIGNL), 266–289 (KKVTVFDITSNRLQGPLPSSVGNM), 290–313 (KSLEELHVANNAFTGVIPPSICQL), and 315–336 (NLENFTYSSNYFSGRPPICAAS). Asparagine 253 carries an N-linked (GlcNAc...) asparagine glycan. Residues asparagine 318 and asparagine 344 are each glycosylated (N-linked (GlcNAc...) asparagine). One copy of the LRR 10 repeat lies at 381-404 (FSPPPPTFKMSPEVRTLPPPIYVY). A contains the Ser-Pro(4) repeats region spans residues 382–744 (SPPPPTFKMS…ASPPPPPSYY (363 aa)). Disordered stretches follow at residues 408 to 445 (PPPPSSKMSPTVRAYSPPPPPSSKMSPSVRAYSPPPPP), 518 to 537 (VYSSPPPPPPSPPPPCPESS), 555 to 576 (PSPVYYPPVTQSPPPPSPVYYP), and 658 to 744 (PPPS…PSYY). Residues 430–439 (SKMSPSVRAY) show a composition bias toward low complexity. The span at 704-729 (YEPPPEYSYSSSPPPPSPTSYFPPMP) shows a compositional bias: pro residues.

Hydroxylated on proline residues in the S-P-P-P-P repeat. In terms of processing, O-glycosylated on hydroxyprolines. As to expression, expressed in root hair cells (at protein level).

The protein resides in the secreted. It is found in the cell wall. Functionally, modulates cell morphogenesis by regulating cell wall formation and assembly, and/or growth polarization. Together with LRX2, component of the extracellular mechanism regulating root hair morphogenesis and elongation. The protein is Leucine-rich repeat extensin-like protein 1 (LRX1) of Arabidopsis thaliana (Mouse-ear cress).